Consider the following 1190-residue polypeptide: Phosphatidylinositol-3,5-bisphosphate 3-phosphatase MTMR4 (1190 aa).

Residue S8 is modified to Phosphoserine. A Myotubularin phosphatase domain is found at 153–570 (EHIRCRQEAE…RALHLWTAVY (418 aa)). A 1,2-diacyl-sn-glycero-3-phospho-(1D-myo-inositol-3,5-bisphosphate) contacts are provided by N320, N345, and I346. The a 1,2-diacyl-sn-glycero-3-phospho-(1D-myo-inositol-3-phosphate) site is built by N320, N345, and I346. The Phosphocysteine intermediate role is filled by C407. A 1,2-diacyl-sn-glycero-3-phospho-(1D-myo-inositol-3,5-bisphosphate) is bound by residues S408, D409, G410, W411, D412, R413, K449, and R453. Residues S408, D409, G410, W411, D412, and R413 each contribute to the a 1,2-diacyl-sn-glycero-3-phospho-(1D-myo-inositol-3-phosphate) site. R453 provides a ligand contact to a 1,2-diacyl-sn-glycero-3-phospho-(1D-myo-inositol-3-phosphate). S610 and S629 each carry phosphoserine. 3 disordered regions span residues 616 to 694 (SACD…FKGH), 724 to 749 (ETEA…GKPP), and 773 to 848 (DFPE…PSSV). Residues 618 to 637 (CDTSSPLTRTSSDPNLNNHS) are compositionally biased toward polar residues. The segment covering 782-847 (LTGTPQQPHL…SISHQEQPSS (66 aa)) has biased composition (polar residues). The short motif at 999-1003 (VPPLY) is the PY-motif; substrate motif for NEDD4 element. Positions 1020-1052 (LRQIEAGYRQEVEQLRRQVRELQMRLDIRHCCA) form a coiled coil. Residues 1109 to 1169 (DHMASHCFNC…VCNSCYEHIQ (61 aa)) form an FYVE-type zinc finger. Positions 1115, 1118, 1131, 1134, 1139, 1142, 1161, and 1164 each coordinate Zn(2+).

This sequence belongs to the protein-tyrosine phosphatase family. Non-receptor class myotubularin subfamily. In terms of assembly, homooligomeric. Forms MTMR3:MTMR4 heterooligomers; regulates the localization of both proteins. The MTMR3:MTMR4 heterooligomer can also recruit both CEP55 and PLK1; occurs during early mitosis, regulates the phosphorylation of CEP55 by PLK1 and its recruitment to the midbody where it can mediate cell abscission. Interacts with SMAD2 and SMAD3; negatively regulates TGF-beta signaling through SMAD2 and SMAD3 dephosphorylation and retention in endosomes. Interacts with SMAD1; negatively regulates BMP signaling through SMAD1 dephosphorylation and retention in endosomes. Ubiquitinated. Ubiquitination by NEDD4 probably leads to proteasomal degradation. Post-translationally, phosphorylated by CDK1 during mitosis.

It localises to the early endosome membrane. The protein resides in the recycling endosome membrane. It is found in the late endosome membrane. The protein localises to the cytoplasmic vesicle. Its subcellular location is the phagosome membrane. The enzyme catalyses a 1,2-diacyl-sn-glycero-3-phospho-(1D-myo-inositol-3-phosphate) + H2O = a 1,2-diacyl-sn-glycero-3-phospho-(1D-myo-inositol) + phosphate. It catalyses the reaction a 1,2-diacyl-sn-glycero-3-phospho-(1D-myo-inositol-3,5-bisphosphate) + H2O = a 1,2-diacyl-sn-glycero-3-phospho-(1D-myo-inositol-5-phosphate) + phosphate. It carries out the reaction 1,2-dioctanoyl-sn-glycero-3-phospho-(1-D-myo-inositol-3-phosphate) + H2O = 1,2-dioctanoyl-sn-glycero-3-phospho-(1D-myo-inositol) + phosphate. The catalysed reaction is 1,2-dioctanoyl-sn-glycero-3-phospho-(1D-myo-inositol-3,5-bisphosphate) + H2O = 1,2-dioctanoyl-sn-glycero-3-phospho-(1D-myo-inositol-5-phosphate) + phosphate. Functionally, lipid phosphatase that specifically dephosphorylates the D-3 position of phosphatidylinositol 3-phosphate and phosphatidylinositol 3,5-bisphosphate, generating phosphatidylinositol and phosphatidylinositol 5-phosphate. Decreases the levels of phosphatidylinositol 3-phosphate, a phospholipid found in cell membranes where it acts as key regulator of both cell signaling and intracellular membrane traffic, in a subset of endosomal membranes to negatively regulate both endocytic recycling and trafficking and/or maturation of endosomes toward lysosomes. Through phosphatidylinositol 3-phosphate turnover in phagosome membranes regulates phagocytosis and phagosome maturation. By decreasing phosphatidylinositol 3-monophosphate (PI3P) levels in immune cells it can also regulate the innate immune response. Beside its lipid phosphatase activity, can also function as a molecular adapter to regulate midbody abscission during mitotic cytokinesis. Can also negatively regulate TGF-beta and BMP signaling through Smad proteins dephosphorylation and retention in endosomes. The protein is Phosphatidylinositol-3,5-bisphosphate 3-phosphatase MTMR4 of Mus musculus (Mouse).